The sequence spans 110 residues: Co-chaperonin GroES (110 aa).

The protein belongs to the GroES chaperonin family. Heptamer of 7 subunits arranged in a ring. Interacts with the chaperonin GroEL.

It localises to the cytoplasm. Together with the chaperonin GroEL, plays an essential role in assisting protein folding. The GroEL-GroES system forms a nano-cage that allows encapsulation of the non-native substrate proteins and provides a physical environment optimized to promote and accelerate protein folding. GroES binds to the apical surface of the GroEL ring, thereby capping the opening of the GroEL channel. The chain is Co-chaperonin GroES from Mycoplasma genitalium (strain ATCC 33530 / DSM 19775 / NCTC 10195 / G37) (Mycoplasmoides genitalium).